The primary structure comprises 2349 residues: Reducing polyketide synthase hmp8 (2349 aa).

Residues 9–435 enclose the Ketosynthase family 3 (KS3) domain; it reads HVPVAIIGLA…GTNGHVVLEA (427 aa). Active-site for beta-ketoacyl synthase activity residues include cysteine 182, histidine 317, and histidine 357. A malonyl-CoA:ACP transacylase (MAT) domain region spans residues 551-856; sequence FVFTGQGAQW…SHNGIKNVAY (306 aa). Positions 930–1066 are N-terminal hotdog fold; it reads RSLIGAPVPM…GLVAIDYEES (137 aa). The 321-residue stretch at 930–1250 folds into the PKS/mFAS DH domain; that stretch reads RSLIGAPVPM…TSELDMDSGK (321 aa). The segment at 932–1244 is dehydratase (DH) domain; the sequence is LIGAPVPMMA…SVKDFRTSEL (313 aa). Catalysis depends on histidine 962, which acts as the Proton acceptor; for dehydratase activity. The interval 1094–1250 is C-terminal hotdog fold; sequence PEHYAHDKFY…TSELDMDSGK (157 aa). The Proton donor; for dehydratase activity role is filled by aspartate 1160. The tract at residues 1641-1953 is enoyl reductase (ER) domain; the sequence is GLLDTLKFVP…QGKHRGKMVL (313 aa). The interval 1977 to 2157 is ketoreductase (KR) domain; it reads ATYLFVGGLG…ISVNLGIMRD (181 aa). In terms of domain architecture, Carrier spans 2267 to 2344; sequence EAAEIITDAL…SFAVKIAEKS (78 aa). The residue at position 2304 (serine 2304) is an O-(pantetheine 4'-phosphoryl)serine.

Its pathway is secondary metabolite biosynthesis. Its function is as follows. Reducing polyketide synthase; part of the gene cluster that mediates the biosynthesis of hypothemycin, a resorcylic acid lactone (RAL) that irreversibly inhibits a subset of protein kinases with a conserved cysteine in the ATP binding site such as human ERK2. The first step is performed by both PKSs hmp3 and hmp8 and leads to the production of 7',8'-dehydrozearalenol (DHZ). The highly reducing PKS hpm8 synthesizes the reduced hexaketide (7S,11S,2E,8E)-7,11-dihydroxy-dodeca-2,8-dienoate, which is transferred downstream to the non-reducing PKS hpm3. Hpm3 then extends the reduced hexaketide to a nonaketide, after which regioselective cyclization and macrolactonization affords DHZ. The next step is the conversion of DHZ into aigialomycin C and is performed by the O-methyltransferase hmp5, the FAD-binding monooxygenase hmp7, and the cytochrome P450 monooxygenase hmp1. The wide substrate tolerance of the hmp5 and hmp7 implies that the reactions from DHZ to aigialomycin C can occur in any order. The steps from aigialomycin C to hypothemycin are less well established. The FAD-linked oxidoreductase hmp9 presumably catalyzes oxidation of the C-6' hydroxyl to a ketone. The timing of this oxidation is important, since the resulting enone functional group is a Michael acceptor that can react spontaneously with glutathione, an abundant metabolite in fungal cells. The glutathione S-transferase hmp2 catalyzes cis-trans isomerization of the 7',8' double bond with equilibrium favoring the trans isomer. The hpm6-encoded transporter might preferentially pump hypothemycin out of the cell relative to the trans isomer aigialomycin A. The cis-to-trans isomerization may be coupled with C-4' hydroxylation, since all known hypothemycin analogs containing the enone functional group also have hydroxyl groups at both C-4' and C-5'. The polypeptide is Reducing polyketide synthase hmp8 (Hypomyces subiculosus (Nectria subiculosa)).